A 417-amino-acid chain; its full sequence is MKLMDSTLLGRSRFSFFAAMPDSVTQAVSALYDAYPFPPEPMQDGPPPGYNWRWHYPSAYAFCTGRAPQLGRPRILDAGCGTGVSTDYLAHLNPSAEITAIDISAGTLAVAQERCQRSGVADRIHFQQLSLYDVAQLPGEFDQINCVGVLHHLEDPDRGLAALASKLAPGGILHIFVYAEIGRAEIRQMQEAIALLQGERRGDYRDGVAIGREIFSQLPANNRLRRREEERWALENQRDECFADMYVHPQEIDYNTETLRRWIEGSGLTFLGFSDRDRWQPDRLFGSSDTLRDRFQSLSKWQRYRLIELLDPEITHFEFFLGRSPLPQYDWSDNDQLLHAKPVRNECLYGWPSRDIFDPDYRPRTLSEAEYAFLEQCDRPLDSALTVAELLQTSSLDLAAVRQLIDQQLILLVPAQT.

This sequence to M.tuberculosis Rv2067c.

This is an uncharacterized protein from Synechococcus sp. (strain ATCC 27144 / PCC 6301 / SAUG 1402/1) (Anacystis nidulans).